A 315-amino-acid chain; its full sequence is Calumenin (315 aa).

The N-terminal stretch at 1-19 is a signal peptide; sequence MDLRQFLMCLSLCTAFALS. Phosphotyrosine is present on Y47. T65 carries the phosphothreonine modification. 6 EF-hand domains span residues 68–103, 104–139, 151–186, 188–223, 229–264, and 265–300; these read ESKEKLGMIVDKIDTDKDGFVTEGELKSRIKHAQKK, YIYDNVENQWQEFDMNQDGLISWDEYRNVTYGTYLD, PIMVRDERRFKMADQDGDLIATKEEFTAFLHPEEYD, MKDIVLQETMEDIDQNADGFIDLEEYIGDMYSHDGN, WVKTEREQFVEFRDKNRDGKMDKEETKDWILPSDYD, and HAEAEARHLVYESDQDKDGKLTKEEIVDKYDLFVGS. S69 bears the Phosphoserine mark. Residues D81, D83, D85, E92, D117, N119, D121, and E128 each contribute to the Ca(2+) site. N131 carries an N-linked (GlcNAc...) asparagine glycan. Ca(2+) is bound by residues D164, D166, D168, E175, D201, N203, D205, E212, D242, N244, D246, K248, and E253. T254 carries the phosphothreonine modification. 2 positions are modified to phosphoserine: S261 and S277. D278, D280, D282, K284, and E289 together coordinate Ca(2+). The Prevents secretion from ER motif lies at 312-315; sequence HDEF.

The protein belongs to the CREC family. As to quaternary structure, binds crotoxin. Interacts with GGCX.

The protein localises to the endoplasmic reticulum membrane. It localises to the golgi apparatus. Its subcellular location is the secreted. It is found in the melanosome. The protein resides in the sarcoplasmic reticulum lumen. Functionally, involved in regulation of vitamin K-dependent carboxylation of multiple N-terminal glutamate residues. Seems to inhibit gamma-carboxylase GGCX. Binds 7 calcium ions with a low affinity. The protein is Calumenin (Calu) of Rattus norvegicus (Rat).